A 363-amino-acid chain; its full sequence is tRNA dimethylallyltransferase (363 aa).

The interval 1 to 55 is unknown insert; the sequence is MLACNDDTSLYLLVKQVTKKEIYSNDLENGNVKRGASMQSLYLIGDPKCCRNNSS. 65-72 serves as a coordination point for ATP; sequence GPTASGKS. Residue 67 to 72 coordinates substrate; the sequence is TASGKS. Interaction with substrate tRNA regions lie at residues 90–93 and 214–218; these read DSMQ and QRLIR.

Belongs to the IPP transferase family. Monomer. The cofactor is Mg(2+).

The enzyme catalyses adenosine(37) in tRNA + dimethylallyl diphosphate = N(6)-dimethylallyladenosine(37) in tRNA + diphosphate. Functionally, catalyzes the transfer of a dimethylallyl group onto the adenine at position 37 in tRNAs that read codons beginning with uridine, leading to the formation of N6-(dimethylallyl)adenosine (i(6)A). The sequence is that of tRNA dimethylallyltransferase from Rickettsia conorii (strain ATCC VR-613 / Malish 7).